Consider the following 157-residue polypeptide: Endoribonuclease YbeY (157 aa).

Positions 111, 115, and 121 each coordinate Zn(2+).

This sequence belongs to the endoribonuclease YbeY family. Zn(2+) is required as a cofactor.

The protein resides in the cytoplasm. Functionally, single strand-specific metallo-endoribonuclease involved in late-stage 70S ribosome quality control and in maturation of the 3' terminus of the 16S rRNA. The chain is Endoribonuclease YbeY from Pseudomonas putida (strain ATCC 47054 / DSM 6125 / CFBP 8728 / NCIMB 11950 / KT2440).